The sequence spans 258 residues: Sugar fermentation stimulation protein homolog (258 aa).

Belongs to the SfsA family.

This Marinomonas sp. (strain MWYL1) protein is Sugar fermentation stimulation protein homolog.